The sequence spans 977 residues: Macrophage colony-stimulating factor 1 receptor (977 aa).

The N-terminal stretch at M1–G19 is a signal peptide. Topologically, residues A20–P515 are extracellular. Ig-like C2-type domains are found at residues E24 to P104, S107 to R197, Q204 to S298, A299 to R397, and Y398 to Q503. Intrachain disulfides connect C42-C84, C127-C177, and C224-C278. Residues N45 and N73 are each glycosylated (N-linked (GlcNAc...) asparagine). Residues N302, N335, N389, N410, N449, N478, and N491 are each glycosylated (N-linked (GlcNAc...) asparagine). C417 and C483 are joined by a disulfide. The chain crosses the membrane as a helical span at residues V516–Y536. Residues K537 to C977 lie on the Cytoplasmic side of the membrane. A regulatory juxtamembrane domain region spans residues Q540–K572. 2 positions are modified to phosphotyrosine; by autocatalysis: Y544 and Y559. The Protein kinase domain maps to L580 to R913. ATP is bound by residues L586 to V594 and K614. Residues Y697 and Y706 each carry the phosphotyrosine; by autocatalysis modification. S711 carries the post-translational modification Phosphoserine. Y721 carries the phosphotyrosine; by autocatalysis modification. D776 serves as the catalytic Proton acceptor. An activation loop region spans residues D794–P816. Y807 and Y921 each carry phosphotyrosine; by autocatalysis. A disordered region spans residues Y921–A957. Residues G929–G941 are compositionally biased toward gly residues. Y974 carries the post-translational modification Phosphotyrosine; by autocatalysis.

It belongs to the protein kinase superfamily. Tyr protein kinase family. CSF-1/PDGF receptor subfamily. In terms of assembly, monomer. Homodimer. Interacts with CSF1 and IL34. Interaction with dimeric CSF1 or IL34 leads to receptor homodimerization. Interacts with INPPL1/SHIP2 and THOC5. Interacts (tyrosine phosphorylated) with PLCG2 (via SH2 domain). Interacts (tyrosine phosphorylated) with PIK3R1 (via SH2 domain). Interacts (tyrosine phosphorylated) with FYN, YES1 and SRC (via SH2 domain). Interacts (tyrosine phosphorylated) with CBL, GRB2 and SLA2. Autophosphorylated in response to CSF1 or IL34 binding. Phosphorylation at Tyr-559 is important for normal down-regulation of signaling by ubiquitination, internalization and degradation. Phosphorylation at Tyr-559 and Tyr-807 is important for interaction with SRC family members, including FYN, YES1 and SRC, and for subsequent activation of these protein kinases. Phosphorylation at Tyr-697 and Tyr-921 is important for interaction with GRB2. Phosphorylation at Tyr-721 is important for interaction with PIK3R1. Phosphorylation at Tyr-721 and Tyr-807 is important for interaction with PLCG2. Phosphorylation at Tyr-974 is important for interaction with CBL. Dephosphorylation by PTPN2 negatively regulates downstream signaling and macrophage differentiation. Post-translationally, ubiquitinated. Becomes rapidly polyubiquitinated after autophosphorylation, leading to its degradation. Widely expressed.

It is found in the cell membrane. The catalysed reaction is L-tyrosyl-[protein] + ATP = O-phospho-L-tyrosyl-[protein] + ADP + H(+). Its activity is regulated as follows. Present in an inactive conformation in the absence of bound ligand. CSF1 or IL34 binding leads to dimerization and activation by autophosphorylation on tyrosine residues. Inhibited by imatinib/STI-571 (Gleevec), dasatinib, sunitinib/SU11248, lestaurtinib/CEP-701, midostaurin/PKC-412, Ki20227, linifanib/ABT-869, Axitinib/AG013736, sorafenib/BAY 43-9006 and GW2580. Functionally, tyrosine-protein kinase that acts as a cell-surface receptor for CSF1 and IL34 and plays an essential role in the regulation of survival, proliferation and differentiation of hematopoietic precursor cells, especially mononuclear phagocytes, such as macrophages and monocytes. Promotes the release of pro-inflammatory chemokines in response to IL34 and CSF1, and thereby plays an important role in innate immunity and in inflammatory processes. Plays an important role in the regulation of osteoclast proliferation and differentiation, the regulation of bone resorption, and is required for normal bone and tooth development. Required for normal male and female fertility, and for normal development of milk ducts and acinar structures in the mammary gland during pregnancy. Promotes reorganization of the actin cytoskeleton, regulates formation of membrane ruffles, cell adhesion and cell migration, and promotes cancer cell invasion. Activates several signaling pathways in response to ligand binding, including the ERK1/2 and the JNK pathway. Phosphorylates PIK3R1, PLCG2, GRB2, SLA2 and CBL. Activation of PLCG2 leads to the production of the cellular signaling molecules diacylglycerol and inositol 1,4,5-trisphosphate, that then lead to the activation of protein kinase C family members, especially PRKCD. Phosphorylation of PIK3R1, the regulatory subunit of phosphatidylinositol 3-kinase, leads to activation of the AKT1 signaling pathway. Activated CSF1R also mediates activation of the MAP kinases MAPK1/ERK2 and/or MAPK3/ERK1, and of the SRC family kinases SRC, FYN and YES1. Activated CSF1R transmits signals both via proteins that directly interact with phosphorylated tyrosine residues in its intracellular domain, or via adapter proteins, such as GRB2. Promotes activation of STAT family members STAT3, STAT5A and/or STAT5B. Promotes tyrosine phosphorylation of SHC1 and INPP5D/SHIP-1. Receptor signaling is down-regulated by protein phosphatases, such as INPP5D/SHIP-1, that dephosphorylate the receptor and its downstream effectors, and by rapid internalization of the activated receptor. In the central nervous system, may play a role in the development of microglia macrophages. In Mus musculus (Mouse), this protein is Macrophage colony-stimulating factor 1 receptor (Csf1r).